Here is a 258-residue protein sequence, read N- to C-terminus: Homeobox-leucine zipper protein ATHB-7 (258 aa).

Residues 29 to 88 (NKNNQRRFSDEQIKSLEMMFESETRLEPRKKVQLARELGLQPRQVAIWFQNKRARWKSKQ) constitute a DNA-binding region (homeobox). Residues 89-124 (LETEYNILRQNYDNLASQFESLKKEKQALVSELQRL) are leucine-zipper. A disordered region spans residues 149–183 (SSTHHESENEENRRRKPEEVRPEMEMKDDKGHHGV). Positions 151 to 183 (THHESENEENRRRKPEEVRPEMEMKDDKGHHGV) are enriched in basic and acidic residues.

Belongs to the HD-ZIP homeobox family. Class I subfamily. As to quaternary structure, interacts with TBP2 and TFIIB1. Widely expressed.

It localises to the nucleus. Its function is as follows. Probable transcription activator that may act as growth regulators in response to water deficit. The protein is Homeobox-leucine zipper protein ATHB-7 (ATHB-7) of Arabidopsis thaliana (Mouse-ear cress).